The following is a 537-amino-acid chain: Phosphoenolpyruvate carboxykinase (ATP) (537 aa).

Substrate is bound by residues Arg-61, Tyr-195, and Lys-201. ATP is bound by residues Lys-201, His-220, and 236–244; that span reads GLSGTGKTT. The Mn(2+) site is built by Lys-201 and His-220. Asp-257 contacts Mn(2+). Glu-285 contributes to the ATP binding site. Positions 311 to 321 are enriched in basic and acidic residues; the sequence is PDFDNGSKTEN. Positions 311–342 are disordered; it reads PDFDNGSKTENTRSAYPLESIPNASPTGRAGQ. Arg-323 serves as a coordination point for substrate. ATP is bound by residues Arg-323 and Thr-448.

The protein belongs to the phosphoenolpyruvate carboxykinase (ATP) family. Mn(2+) is required as a cofactor.

Its subcellular location is the cytoplasm. It catalyses the reaction oxaloacetate + ATP = phosphoenolpyruvate + ADP + CO2. The protein operates within carbohydrate biosynthesis; gluconeogenesis. Its function is as follows. Involved in the gluconeogenesis. Catalyzes the conversion of oxaloacetate (OAA) to phosphoenolpyruvate (PEP) through direct phosphoryl transfer between the nucleoside triphosphate and OAA. The sequence is that of Phosphoenolpyruvate carboxykinase (ATP) from Rhodopseudomonas palustris (strain BisB5).